The chain runs to 34 residues: Toxin GTx1-15 (34 aa).

Intrachain disulfides connect Cys2–Cys17, Cys9–Cys23, and Cys16–Cys30. Phe34 carries the phenylalanine amide modification.

This sequence belongs to the neurotoxin 10 (Hwtx-1) family. 08 (Gtx1-15) subfamily. As to expression, expressed by the venom gland.

The protein resides in the secreted. Functionally, potent voltage-gated sodium channel blocker. Potently inhibits the voltage-gated sodium channels Nav1.7/SCN9A (IC(50)=0.58-10 nM). Also shows a moderate activity on Nav1.1/SCN1A (IC(50)=6 nM), Nav1.2/SCN2A (IC(50)=5-128 nM), Nav1.3/SCN3A (IC(50)=20.3-170 nM), and Nav1.6/SCN8A (IC(50)=17-20.1 nM). Shows an unclear inhibition of Nav1.4/SCN4A (IC(50)=200 nM to &gt;10 uM), Nav1.5/SCN5A (IC(50)=140 nM to &gt;10 uM) and Nav1.8/SCN10A (IC(50)=68-12200 nM). Weakly blocks the low voltage-gated calcium channels Cav3.1/CACNA1G (30% inhibition of the peak current at 9.8 nM). shows moderate affinity for lipid bilayers. In vivo, when tested on the OD1-induced mouse model of Nav1.7/SCN9A-mediated pain, the toxin is effective when co-administered with OD1, but lacks efficacy when delivered systemically. The chain is Toxin GTx1-15 from Grammostola porteri (Tarantula spider).